A 198-amino-acid polypeptide reads, in one-letter code: uncharacterized protein (198 aa).

Residues 51 to 74 form a disordered region; that stretch reads EEPDNGDDRGSRRTTGQGRKWAAH.

This is an uncharacterized protein from Homo sapiens (Human).